The sequence spans 659 residues: Beta-galactosidase BgaA (659 aa).

R103 serves as a coordination point for substrate. Residue C107 coordinates Zn(2+). N141 lines the substrate pocket. Catalysis depends on E142, which acts as the Proton donor. Positions 148, 150, and 153 each coordinate Zn(2+). Catalysis depends on E298, which acts as the Nucleophile. W307 serves as a coordination point for substrate.

The protein belongs to the glycosyl hydrolase 42 family. In terms of assembly, dimer.

The enzyme catalyses Hydrolysis of terminal non-reducing beta-D-galactose residues in beta-D-galactosides.. With respect to regulation, inhibited by Cu(2+), Hg(2+) and Zn(2+). No effect with Ca(2+), Mg(2+), Mn(2+) or excess EDTA (10 mM). Functionally, involved in plant cell wall degradation in cooperation with cellulosome. Hydrolyzes both p-nitrophenyl-alpha-L-arabinopyranoside (pNPAp) and p-nitrophenyl-beta-D-galactopyranoside (pNPGp), with higher activity for pNPAp. Shows hydrolysis activity against p-nitrophenyl-beta-D-fucopyranoside (pNPFp), but not against p-nitrophenyl-alpha-L-arabinofuranoside (pNPAf), o-nitrophenyl-beta-D-galactopyranoside (oNPGp), p-nitrophenyl-beta-D-xylopyranoside (pNPXp), p-nitrophenyl-beta-D-glucopyranoside (pNPGLp), p-nitrophenyl-beta-D-cellobiopyranoside (pNPCp), p-nitrophenyl-beta-lactopyranoside (pNPLp) or p-nitrophenyl-alpha-galactopyranoside (pNPalphaGp). No detectable activity against arabinan or arabinoxylan, but activity against arabinogalactan can be detected. Increases degradation activity of alpha-L-arabinofuranosidase (ArfA) and endo-1,4-beta-xylanase (XynA) when corn fiber gum and corn stem powder are used as substrates. This Clostridium cellulovorans (strain ATCC 35296 / DSM 3052 / OCM 3 / 743B) protein is Beta-galactosidase BgaA (bgaA).